Here is a 156-residue protein sequence, read N- to C-terminus: Small ribosomal subunit protein uS7 (156 aa).

This sequence belongs to the universal ribosomal protein uS7 family. Part of the 30S ribosomal subunit. Contacts proteins S9 and S11.

In terms of biological role, one of the primary rRNA binding proteins, it binds directly to 16S rRNA where it nucleates assembly of the head domain of the 30S subunit. Is located at the subunit interface close to the decoding center, probably blocks exit of the E-site tRNA. In Methylococcus capsulatus (strain ATCC 33009 / NCIMB 11132 / Bath), this protein is Small ribosomal subunit protein uS7.